The sequence spans 295 residues: THO complex subunit 4C (295 aa).

The disordered stretch occupies residues 1–67 (MSDALNMTLD…GPLAVNTRPS (67 aa)). N-acetylserine is present on Ser-2. Positions 11–22 (EIVKKSKSERSA) are enriched in basic and acidic residues. Residues 38–55 (GRGGPNGVVGGGRGGGPV) show a composition bias toward gly residues. One can recognise an RRM domain in the interval 107–184 (TTVYITNLDQ…RPMKLEILGG (78 aa)). The segment at 212–295 (QGVRGGRVGR…SYHAEAMNIS (84 aa)) is disordered. 2 stretches are compositionally biased toward gly residues: residues 213–227 (GVRGGRVGRGRGSGP) and 242–267 (VTAGRGGFRGRGRGNGGGRGNKSGGR). Positions 271–288 (KPVEKSAADLDKDLESYH) are enriched in basic and acidic residues.

This sequence belongs to the ALYREF family. Interacts with PARP1.

The protein localises to the nucleus. The protein resides in the nucleoplasm. Its subcellular location is the nucleolus. Export adapter involved in nuclear export of spliced and unspliced mRNA. In Arabidopsis thaliana (Mouse-ear cress), this protein is THO complex subunit 4C.